Reading from the N-terminus, the 1049-residue chain is Isoleucine--tRNA ligase (1049 aa).

Residues 48–59 (PYPSSPTPHIGT) carry the 'HIGH' region motif. Residues 597-601 (EMHKS) carry the 'KMSKS' region motif. K600 provides a ligand contact to ATP.

Belongs to the class-I aminoacyl-tRNA synthetase family. IleS type 2 subfamily. In terms of assembly, monomer. Zn(2+) is required as a cofactor.

The protein resides in the cytoplasm. The enzyme catalyses tRNA(Ile) + L-isoleucine + ATP = L-isoleucyl-tRNA(Ile) + AMP + diphosphate. Functionally, catalyzes the attachment of isoleucine to tRNA(Ile). As IleRS can inadvertently accommodate and process structurally similar amino acids such as valine, to avoid such errors it has two additional distinct tRNA(Ile)-dependent editing activities. One activity is designated as 'pretransfer' editing and involves the hydrolysis of activated Val-AMP. The other activity is designated 'posttransfer' editing and involves deacylation of mischarged Val-tRNA(Ile). The protein is Isoleucine--tRNA ligase of Saccharolobus islandicus (strain M.16.27) (Sulfolobus islandicus).